A 296-amino-acid polypeptide reads, in one-letter code: 33 kDa chaperonin (296 aa).

Intrachain disulfides connect Cys-237/Cys-239 and Cys-270/Cys-273.

It belongs to the HSP33 family. In terms of processing, under oxidizing conditions two disulfide bonds are formed involving the reactive cysteines. Under reducing conditions zinc is bound to the reactive cysteines and the protein is inactive.

The protein localises to the cytoplasm. Redox regulated molecular chaperone. Protects both thermally unfolding and oxidatively damaged proteins from irreversible aggregation. Plays an important role in the bacterial defense system toward oxidative stress. The polypeptide is 33 kDa chaperonin (Acetivibrio thermocellus (strain ATCC 27405 / DSM 1237 / JCM 9322 / NBRC 103400 / NCIMB 10682 / NRRL B-4536 / VPI 7372) (Clostridium thermocellum)).